Reading from the N-terminus, the 211-residue chain is Uracil phosphoribosyltransferase (211 aa).

5-phospho-alpha-D-ribose 1-diphosphate is bound by residues R77, R102, and 129–137; that span reads DPMLATGGS. Uracil contacts are provided by residues I192 and 197–199; that span reads GDA. Residue D198 participates in 5-phospho-alpha-D-ribose 1-diphosphate binding.

Belongs to the UPRTase family. Requires Mg(2+) as cofactor.

It carries out the reaction UMP + diphosphate = 5-phospho-alpha-D-ribose 1-diphosphate + uracil. It functions in the pathway pyrimidine metabolism; UMP biosynthesis via salvage pathway; UMP from uracil: step 1/1. With respect to regulation, allosterically activated by GTP. Functionally, catalyzes the conversion of uracil and 5-phospho-alpha-D-ribose 1-diphosphate (PRPP) to UMP and diphosphate. The protein is Uracil phosphoribosyltransferase of Corynebacterium aurimucosum (strain ATCC 700975 / DSM 44827 / CIP 107346 / CN-1) (Corynebacterium nigricans).